We begin with the raw amino-acid sequence, 78 residues long: Translation initiation factor IF-1, chloroplastic (78 aa).

An S1-like domain is found at 1–72 (MEKQKLIDME…TKGRITYRLR (72 aa)).

The protein belongs to the IF-1 family. Component of the 30S ribosomal translation pre-initiation complex which assembles on the 30S ribosome in the order IF-2 and IF-3, IF-1 and N-formylmethionyl-tRNA(fMet); mRNA recruitment can occur at any time during PIC assembly.

It localises to the plastid. The protein resides in the chloroplast. One of the essential components for the initiation of protein synthesis. Stabilizes the binding of IF-2 and IF-3 on the 30S subunit to which N-formylmethionyl-tRNA(fMet) subsequently binds. Helps modulate mRNA selection, yielding the 30S pre-initiation complex (PIC). Upon addition of the 50S ribosomal subunit IF-1, IF-2 and IF-3 are released leaving the mature 70S translation initiation complex. The protein is Translation initiation factor IF-1, chloroplastic of Marchantia polymorpha (Common liverwort).